The chain runs to 168 residues: MRVQMFSGKETGEFIGGKTSLQTEAYENGLKDEELYYNIKDDLGLISRGNVYLDKTAQTIFSELSIAIDKGNLEPLKNFLKNNKLQHKKADINAKNGYGDTPLCYAAEKNNFEVAKILIKYGADLTIHNAKGETPIELFSQYGNREAVNYLQHCLDILGNNSLYEDTI.

ANK repeat units follow at residues 59–88 (TIFSELSIAIDKGNLEPLKNFLKNNKLQHK), 98–127 (YGDTPLCYAAEKNNFEVAKILIKYGADLTI), and 131–160 (KGETPIELFSQYGNREAVNYLQHCLDILGN).

In Rickettsia bellii (strain RML369-C), this protein is Putative ankyrin repeat protein RBE_1411.